A 363-amino-acid polypeptide reads, in one-letter code: 1,2-Dihydrovomilenine reductase (363 aa).

The Enoyl reductase (ER) domain occupies 24–352 (GILSPFKFSR…KGDVRYRFVI (329 aa)). Cysteine 51 lines the Zn(2+) pocket. NADP(+) is bound at residue serine 53. Positions 54, 74, 104, 107, 110, and 118 each coordinate Zn(2+). Positions 193, 195, 196, 215, 216, 217, 220, 221, 278, 280, 302, and 349 each coordinate NADP(+).

The protein belongs to the zinc-containing alcohol dehydrogenase family. Class-P subfamily. In terms of assembly, homodimer. Zn(2+) is required as a cofactor. Mainly expressed in mature roots and, to a lower extent, in stems and leaves.

It localises to the cytoplasm. The catalysed reaction is 17-O-acetylnorajmaline + NADP(+) = (2R)-1,2-dihydrovomilenine + NADPH + 2 H(+). It catalyses the reaction (20S)-19,20-dihydrovomilenine + NADP(+) = vomilenine + NADPH + H(+). Its pathway is alkaloid biosynthesis; ajmaline biosynthesis. Functionally, alcohol dehydrogenase involved in the biosynthesis of ajmaline-type monoterpenoid indole alkaloids (MIAs) natural products, important plant-derived pharmaceuticals used in the therapy of heart disorders. Catalyzes the conversion of 1,2-dihydrovomilenine to 17-O-acetylnorajmaline, an intermediate chemical in the biosynthesis of ajmaline. Also able, with a lower efficiency, to convert vomilenine into 19,20-dihydrovomilenine. The polypeptide is 1,2-Dihydrovomilenine reductase (Rauvolfia serpentina (Serpentine wood)).